We begin with the raw amino-acid sequence, 1090 residues long: Nitrogen assimilation transcription factor nit-4 (1090 aa).

The span at 1–14 (MNSSDVQMMSSQDA) shows a compositional bias: polar residues. A disordered region spans residues 1 to 43 (MNSSDVQMMSSQDAPGSAGLAPDNIASSLPSKKKSRRGADPTN). Residues 53–81 (CIACRRRKSKCDGALPSCAACASVYGTEC) constitute a DNA-binding region (zn(2)-C6 fungal-type). 6 disordered regions span residues 145–176 (RRDE…SQAV), 666–689 (FSTS…PAPP), 773–798 (HQHH…YQQQ), 825–875 (GIPT…VKPP), 936–999 (QGWD…QRQQ), and 1033–1053 (HGAE…TTVG). Basic and acidic residues predominate over residues 167 to 176 (GRDDATSQAV). Polar residues predominate over residues 666 to 677 (FSTSEVPSPNRT). A compositionally biased stretch (low complexity) spans 849–859 (QPQQQQQPQAQ). Composition is skewed to gly residues over residues 940–965 (LEGG…GGAG) and 976–988 (NIGG…GGST). Residues 990 to 999 (QRQQQQQRQQ) show a composition bias toward low complexity.

It is found in the nucleus. Its function is as follows. Pathway-specific regulatory gene of nitrate assimilation; it activates the transcription of the genes for nitrate and nitrite reductases. The protein is Nitrogen assimilation transcription factor nit-4 (nit-4) of Neurospora crassa (strain ATCC 24698 / 74-OR23-1A / CBS 708.71 / DSM 1257 / FGSC 987).